Consider the following 377-residue polypeptide: Putative FBD-associated F-box protein At5g44940 (377 aa).

The region spanning 4–50 (FDYISEFPDCLLTQILLNLPTKDSVKTSVLSKRWRNLWLNVPGLRLR) is the F-box domain. The FBD domain occupies 297–346 (IDFHKVPQCLISTLEYVQIEELILKEKSGIKLVDYFLENSAVLKKLTLSF).

This Arabidopsis thaliana (Mouse-ear cress) protein is Putative FBD-associated F-box protein At5g44940.